A 424-amino-acid polypeptide reads, in one-letter code: Glutamyl-tRNA reductase (424 aa).

Residues 50 to 53 (TCNR), serine 98, 103 to 105 (EDQ), and glutamine 109 contribute to the substrate site. Cysteine 51 functions as the Nucleophile in the catalytic mechanism. 178 to 183 (GSGEMG) serves as a coordination point for NADP(+).

This sequence belongs to the glutamyl-tRNA reductase family. In terms of assembly, homodimer.

It catalyses the reaction (S)-4-amino-5-oxopentanoate + tRNA(Glu) + NADP(+) = L-glutamyl-tRNA(Glu) + NADPH + H(+). It functions in the pathway porphyrin-containing compound metabolism; protoporphyrin-IX biosynthesis; 5-aminolevulinate from L-glutamyl-tRNA(Glu): step 1/2. Its function is as follows. Catalyzes the NADPH-dependent reduction of glutamyl-tRNA(Glu) to glutamate 1-semialdehyde (GSA). This chain is Glutamyl-tRNA reductase, found in Methanoregula boonei (strain DSM 21154 / JCM 14090 / 6A8).